The chain runs to 261 residues: 3-methyl-2-oxobutanoate hydroxymethyltransferase (261 aa).

Positions 44 and 83 each coordinate Mg(2+). 3-methyl-2-oxobutanoate is bound by residues 44–45 (DS), Asp83, and Lys112. Glu114 is a Mg(2+) binding site. The active-site Proton acceptor is the Glu181.

The protein belongs to the PanB family. As to quaternary structure, homodecamer; pentamer of dimers. It depends on Mg(2+) as a cofactor.

It localises to the cytoplasm. It carries out the reaction 3-methyl-2-oxobutanoate + (6R)-5,10-methylene-5,6,7,8-tetrahydrofolate + H2O = 2-dehydropantoate + (6S)-5,6,7,8-tetrahydrofolate. It participates in cofactor biosynthesis; (R)-pantothenate biosynthesis; (R)-pantoate from 3-methyl-2-oxobutanoate: step 1/2. Its function is as follows. Catalyzes the reversible reaction in which hydroxymethyl group from 5,10-methylenetetrahydrofolate is transferred onto alpha-ketoisovalerate to form ketopantoate. This is 3-methyl-2-oxobutanoate hydroxymethyltransferase from Acidithiobacillus ferrooxidans (strain ATCC 23270 / DSM 14882 / CIP 104768 / NCIMB 8455) (Ferrobacillus ferrooxidans (strain ATCC 23270)).